The following is a 235-amino-acid chain: CD-NTase-associated protein 13 (235 aa).

Transmembrane regions (helical) follow at residues 14–34 (IVHH…LIWI) and 45–65 (IIFT…IVGL).

It in the C-terminal section; belongs to the bacterial STING family. In terms of assembly, homodimer.

Its subcellular location is the cell inner membrane. In terms of biological role, effector protein of a CBASS antivirus system. CBASS (cyclic oligonucleotide-based antiphage signaling system) provides immunity against bacteriophage. The CD-NTase protein synthesizes cyclic nucleotides in response to infection; these serve as specific second messenger signals. The signals activate a diverse range of effectors, leading to bacterial cell death and thus abortive phage infection. A type I-D(GG) CBASS system. Functionally, binds cyclic dinucleotides: binds c-di-GMP (synthesized by the cognate CdnE encoded upstream in the same operon), cyclic 3'3'-cyclic GMP-AMP (3'3'-cGAMP) but not cUMP-AMP. The effector protein for this CBASS system, its activity is stimulated by c-di-GMP and leads to cell death. The sequence is that of CD-NTase-associated protein 13 from Flavobacteriaceae sp. genome_bin_11.